Here is a 238-residue protein sequence, read N- to C-terminus: Ribosomal RNA small subunit methyltransferase G (238 aa).

S-adenosyl-L-methionine contacts are provided by residues G77, F82, 128-129, and R147; that span reads AE.

The protein belongs to the methyltransferase superfamily. RNA methyltransferase RsmG family.

Its subcellular location is the cytoplasm. In terms of biological role, specifically methylates the N7 position of guanine in position 535 of 16S rRNA. The sequence is that of Ribosomal RNA small subunit methyltransferase G from Listeria monocytogenes serotype 4b (strain F2365).